A 372-amino-acid chain; its full sequence is Queuine tRNA-ribosyltransferase (372 aa).

Catalysis depends on Asp-92, which acts as the Proton acceptor. Substrate contacts are provided by residues 92 to 96, Asp-146, Gln-188, and Gly-215; that span reads DSGGY. The segment at 246–252 is RNA binding; that stretch reads GIGSLRE. Asp-265 acts as the Nucleophile in catalysis. Residues 270–274 form an RNA binding; important for wobble base 34 recognition region; that stretch reads TRLGR. Zn(2+) is bound by residues Cys-303, Cys-305, Cys-308, and His-334.

This sequence belongs to the queuine tRNA-ribosyltransferase family. Homodimer. Within each dimer, one monomer is responsible for RNA recognition and catalysis, while the other monomer binds to the replacement base PreQ1. The cofactor is Zn(2+).

The enzyme catalyses 7-aminomethyl-7-carbaguanine + guanosine(34) in tRNA = 7-aminomethyl-7-carbaguanosine(34) in tRNA + guanine. The protein operates within tRNA modification; tRNA-queuosine biosynthesis. Functionally, catalyzes the base-exchange of a guanine (G) residue with the queuine precursor 7-aminomethyl-7-deazaguanine (PreQ1) at position 34 (anticodon wobble position) in tRNAs with GU(N) anticodons (tRNA-Asp, -Asn, -His and -Tyr). Catalysis occurs through a double-displacement mechanism. The nucleophile active site attacks the C1' of nucleotide 34 to detach the guanine base from the RNA, forming a covalent enzyme-RNA intermediate. The proton acceptor active site deprotonates the incoming PreQ1, allowing a nucleophilic attack on the C1' of the ribose to form the product. After dissociation, two additional enzymatic reactions on the tRNA convert PreQ1 to queuine (Q), resulting in the hypermodified nucleoside queuosine (7-(((4,5-cis-dihydroxy-2-cyclopenten-1-yl)amino)methyl)-7-deazaguanosine). The protein is Queuine tRNA-ribosyltransferase of Prochlorococcus marinus (strain MIT 9211).